Here is a 538-residue protein sequence, read N- to C-terminus: Putative cysteine ligase BshC (538 aa).

This sequence belongs to the BshC family.

Its function is as follows. Involved in bacillithiol (BSH) biosynthesis. May catalyze the last step of the pathway, the addition of cysteine to glucosamine malate (GlcN-Mal) to generate BSH. This chain is Putative cysteine ligase BshC, found in Halalkalibacterium halodurans (strain ATCC BAA-125 / DSM 18197 / FERM 7344 / JCM 9153 / C-125) (Bacillus halodurans).